Reading from the N-terminus, the 1391-residue chain is DNA-directed RNA polymerase subunit beta (1391 aa).

It belongs to the RNA polymerase beta chain family. As to quaternary structure, the RNAP catalytic core consists of 2 alpha, 1 beta, 1 beta' and 1 omega subunit. When a sigma factor is associated with the core the holoenzyme is formed, which can initiate transcription.

The catalysed reaction is RNA(n) + a ribonucleoside 5'-triphosphate = RNA(n+1) + diphosphate. DNA-dependent RNA polymerase catalyzes the transcription of DNA into RNA using the four ribonucleoside triphosphates as substrates. In Granulibacter bethesdensis (strain ATCC BAA-1260 / CGDNIH1), this protein is DNA-directed RNA polymerase subunit beta.